We begin with the raw amino-acid sequence, 475 residues long: Ankyrin repeat, SAM and basic leucine zipper domain-containing protein 1 (475 aa).

The disordered stretch occupies residues 1–25; it reads MAAGPLRGLAVAGGGESSDSEDDGW. 3 positions are modified to phosphoserine: S17, S18, and S20. ANK repeat units follow at residues 45–74, 78–107, 110–144, 148–177, 181–210, and 214–243; these read ERQE…SVDT, YGWT…NASF, DKQT…DPNV, RLMT…EVNT, NGYT…NKMI, and DGKT…PLEG. Residues 272-334 form the SAM domain; that stretch reads SYTAFGDLEI…KIMAALKELE (63 aa).

In terms of assembly, interacts with DDX4, PIWIL1, RANBP9 and TDRD1.

The protein resides in the cytoplasm. Plays a central role during spermatogenesis by repressing transposable elements and preventing their mobilization, which is essential for the germline integrity. Acts via the piRNA metabolic process, which mediates the repression of transposable elements during meiosis by forming complexes composed of piRNAs and Piwi proteins and governs the methylation and subsequent repression of transposons. Its association with pi-bodies suggests a participation in the primary piRNAs metabolic process. Required prior to the pachytene stage to facilitate the production of multiple types of piRNAs, including those associated with repeats involved in the regulation of retrotransposons. May act by mediating protein-protein interactions during germ cell maturation. The sequence is that of Ankyrin repeat, SAM and basic leucine zipper domain-containing protein 1 (ASZ1) from Bos taurus (Bovine).